The following is a 261-amino-acid chain: 3-deoxy-manno-octulosonate cytidylyltransferase (261 aa).

This sequence belongs to the KdsB family.

It localises to the cytoplasm. It catalyses the reaction 3-deoxy-alpha-D-manno-oct-2-ulosonate + CTP = CMP-3-deoxy-beta-D-manno-octulosonate + diphosphate. Its pathway is nucleotide-sugar biosynthesis; CMP-3-deoxy-D-manno-octulosonate biosynthesis; CMP-3-deoxy-D-manno-octulosonate from 3-deoxy-D-manno-octulosonate and CTP: step 1/1. It participates in bacterial outer membrane biogenesis; lipopolysaccharide biosynthesis. Activates KDO (a required 8-carbon sugar) for incorporation into bacterial lipopolysaccharide in Gram-negative bacteria. This is 3-deoxy-manno-octulosonate cytidylyltransferase from Marinobacter nauticus (strain ATCC 700491 / DSM 11845 / VT8) (Marinobacter aquaeolei).